Consider the following 1150-residue polypeptide: DNA polymerase (1150 aa).

Residues 1–53 (MSLVQGHGTSGLFTEPPNPINQQESSGPSLPAQDAAQAFASSPRAGATSTIVN) are disordered.

Belongs to the DNA polymerase type-B family. As to quaternary structure, heterodimer with the terminal protein; this heterodimer binds to bp 9 to 18 of the genome. Forms a complex with viral pTP, DBP and hosts NFIA and POU2F1/OCT1 for initiation of replication.

Its subcellular location is the host nucleus. The catalysed reaction is DNA(n) + a 2'-deoxyribonucleoside 5'-triphosphate = DNA(n+1) + diphosphate. Its function is as follows. Eukaryotic-type DNA polymerase involved in viral genomic replication. DNA synthesis is protein primed, and acts in a strand displacement replication. Assembles in complex with viral pTP, DBP, host NFIA and host POU2F1/OCT1 on viral origin of replication. The polymerase covalently transfers dCMP onto pTP, thereby initiating complementary strand synthesis. The polypeptide is DNA polymerase (Canis lupus familiaris (Dog)).